The sequence spans 30 residues: Cyclotide hypa-A (30 aa).

Positions 1 to 30 form a cross-link, cyclopeptide (Gly-Asn); that stretch reads GIPCAESCVYIPCTITALLGCSCKNKVCYN. Cystine bridges form between C4/C21, C8/C23, and C13/C28.

In terms of processing, this is a cyclic peptide.

In terms of biological role, probably participates in a plant defense mechanism. The polypeptide is Cyclotide hypa-A (Pombalia parviflora (Violetilla)).